A 1201-amino-acid polypeptide reads, in one-letter code: Period circadian protein homolog 3 (1201 aa).

Residues 1-50 (MPRGEAPGPGRRGAKDEALGEESGERWSPEFHLQRKLADSSHSEQQDRNR) are disordered. Residues 13-50 (GAKDEALGEESGERWSPEFHLQRKLADSSHSEQQDRNR) show a composition bias toward basic and acidic residues. The short motif at 55 to 64 (LIMVVQEMKK) is the Nuclear export signal 1 element. 2 PAS domains span residues 121-188 (IASE…RAQL) and 262-328 (YEAP…KVLK). Positions 337–380 (HSPIRFCTQNGDYIILDSSWSSFVNPWSRKISFIIGRHKVRTSP) constitute a PAC domain. A Nuclear export signal 3 motif is present at residues 403–412 (LQEQIYKLLL). Positions 555–760 (LKRKCISCTN…SSSNTGSGPR (206 aa)) are CSNK1E binding domain. 2 disordered regions span residues 717–788 (YSYF…FPPA) and 881–923 (PSMS…RSSS). Residues 721–731 (QGDSTSKQTRS) are compositionally biased toward polar residues. The Nuclear localization signal motif lies at 729–745 (TRSAGCRKGKHKRKKLP). Positions 733-743 (GCRKGKHKRKK) are enriched in basic residues. 2 stretches are compositionally biased toward low complexity: residues 767 to 783 (AQPCCPSAASSPHTSSP) and 881 to 890 (PSMSSAMSPT). The segment covering 900 to 911 (QRREEEKWEAQS) has biased composition (basic and acidic residues). Residue Ser-919 is modified to Phosphoserine. A Nuclear export signal 2 motif is present at residues 925 to 932 (LQLNLLQE). The tract at residues 952 to 1067 (TEYCVTGNNG…GSAASGSSDS (116 aa)) is disordered. 4 stretches are compositionally biased toward polar residues: residues 957–976 (TGNNGSESSPATTGALSTGS), 983–994 (SHPTASALSTGS), 1001–1012 (SHPTASALSTGS), and 1035–1050 (TPSHPTATVLSTGSPP). Repeat copies occupy residues 965–982 (SPATTGALSTGSPPRENP), 983–1000 (SHPTASALSTGSPPMKNP), 1001–1018 (SHPTASALSTGSPPMKNP), 1019–1036 (SHPTASTLSMGLPPSRTP), and 1037–1054 (SHPTATVLSTGSPPSESP). The segment at 965 to 1054 (SPATTGALST…STGSPPSESP (90 aa)) is 5 X 18 AA tandem repeats of S-[HP]-[AP]-T-[AT]-[GST]-[ATV]-L-S-[MT]-G-[LS]-P-P-[MRS]-[EKR]-[NST]-P. Ser-994 bears the Phosphoserine mark. Phosphoserine is present on Ser-1053. Residues 1053–1067 (SPSRTGSAASGSSDS) are compositionally biased toward low complexity. Positions 1123 to 1201 (ERVKEVVLKE…CGQVLVEDSC (79 aa)) are CRY binding domain.

As to quaternary structure, homodimer. Component of the circadian core oscillator, which includes the CRY proteins, CLOCK or NPAS2, BMAL1 or BMAL2, CSNK1D and/or CSNK1E, TIMELESS and the PER proteins. Interacts directly with PER1, PER2, CRY1, CRY2, and TIMELESS; interaction with CRY1 and CRY2 is weak and not rhythmic. Interacts with FBXW11 and BTRC. Phosphorylation by CSNK1E is weak and appears to require association with PER1 and translocation to the nucleus. In terms of processing, ubiquitinated.

It is found in the cytoplasm. The protein resides in the nucleus. In terms of biological role, originally described as a core component of the circadian clock. The circadian clock, an internal time-keeping system, regulates various physiological processes through the generation of approximately 24 hour circadian rhythms in gene expression, which are translated into rhythms in metabolism and behavior. It is derived from the Latin roots 'circa' (about) and 'diem' (day) and acts as an important regulator of a wide array of physiological functions including metabolism, sleep, body temperature, blood pressure, endocrine, immune, cardiovascular, and renal function. Consists of two major components: the central clock, residing in the suprachiasmatic nucleus (SCN) of the brain, and the peripheral clocks that are present in nearly every tissue and organ system. Both the central and peripheral clocks can be reset by environmental cues, also known as Zeitgebers (German for 'timegivers'). The predominant Zeitgeber for the central clock is light, which is sensed by retina and signals directly to the SCN. The central clock entrains the peripheral clocks through neuronal and hormonal signals, body temperature and feeding-related cues, aligning all clocks with the external light/dark cycle. Circadian rhythms allow an organism to achieve temporal homeostasis with its environment at the molecular level by regulating gene expression to create a peak of protein expression once every 24 hours to control when a particular physiological process is most active with respect to the solar day. Transcription and translation of core clock components (CLOCK, NPAS2, BMAL1, BMAL2, PER1, PER2, PER3, CRY1 and CRY2) plays a critical role in rhythm generation, whereas delays imposed by post-translational modifications (PTMs) are important for determining the period (tau) of the rhythms (tau refers to the period of a rhythm and is the length, in time, of one complete cycle). A diurnal rhythm is synchronized with the day/night cycle, while the ultradian and infradian rhythms have a period shorter and longer than 24 hours, respectively. Disruptions in the circadian rhythms contribute to the pathology of cardiovascular diseases, cancer, metabolic syndromes and aging. A transcription/translation feedback loop (TTFL) forms the core of the molecular circadian clock mechanism. Transcription factors, CLOCK or NPAS2 and BMAL1 or BMAL2, form the positive limb of the feedback loop, act in the form of a heterodimer and activate the transcription of core clock genes and clock-controlled genes (involved in key metabolic processes), harboring E-box elements (5'-CACGTG-3') within their promoters. The core clock genes: PER1/2/3 and CRY1/2 which are transcriptional repressors form the negative limb of the feedback loop and interact with the CLOCK|NPAS2-BMAL1|BMAL2 heterodimer inhibiting its activity and thereby negatively regulating their own expression. This heterodimer also activates nuclear receptors NR1D1, NR1D2, RORA, RORB and RORG, which form a second feedback loop and which activate and repress BMAL1 transcription, respectively. Has a redundant role with the other PER proteins PER1 and PER2 and is not essential for the circadian rhythms maintenance. In contrast, plays an important role in sleep-wake timing and sleep homeostasis probably through the transcriptional regulation of sleep homeostasis-related genes, without influencing circadian parameters. Can bind heme. The protein is Period circadian protein homolog 3 (PER3) of Homo sapiens (Human).